The chain runs to 59 residues: MKLKIVLRRGLAGKDKAKKEAVRSLGLKKVGETVILEKNPMVCGNLEKVKHLVCVEELS.

Belongs to the universal ribosomal protein uL30 family. Part of the 50S ribosomal subunit.

The sequence is that of Large ribosomal subunit protein uL30 from Hydrogenobaculum sp. (strain Y04AAS1).